The sequence spans 140 residues: Cystatin-C (140 aa).

Residues 1 to 20 form the signal peptide; the sequence is MASPLRSLLFLLAVLAVAWA. A Secondary area of contact motif is present at residues 75–79; it reads QLVAG. 2 disulfide bridges follow: Cys93-Cys103 and Cys117-Cys137.

Belongs to the cystatin family.

Its subcellular location is the secreted. In terms of biological role, as an inhibitor of cysteine proteinases, this protein is thought to serve an important physiological role as a local regulator of this enzyme activity. This Mus musculus (Mouse) protein is Cystatin-C (Cst3).